Reading from the N-terminus, the 196-residue chain is Holliday junction branch migration complex subunit RuvA (196 aa).

The tract at residues 1-63 (MIASVRGEVI…EDSMTLYGFA (63 aa)) is domain I. A domain II region spans residues 64–142 (DADARDLFGT…PVTTGAGVTA (79 aa)). Residues 143–151 (VGGHAVRGP) form a flexible linker region. The interval 151-196 (PVVEALVGLGFAAKQAEEACDKVLAADPDATTSSALRAALSMLGKK) is domain III.

It belongs to the RuvA family. In terms of assembly, homotetramer. Forms an RuvA(8)-RuvB(12)-Holliday junction (HJ) complex. HJ DNA is sandwiched between 2 RuvA tetramers; dsDNA enters through RuvA and exits via RuvB. An RuvB hexamer assembles on each DNA strand where it exits the tetramer. Each RuvB hexamer is contacted by two RuvA subunits (via domain III) on 2 adjacent RuvB subunits; this complex drives branch migration. In the full resolvosome a probable DNA-RuvA(4)-RuvB(12)-RuvC(2) complex forms which resolves the HJ.

Its subcellular location is the cytoplasm. Functionally, the RuvA-RuvB-RuvC complex processes Holliday junction (HJ) DNA during genetic recombination and DNA repair, while the RuvA-RuvB complex plays an important role in the rescue of blocked DNA replication forks via replication fork reversal (RFR). RuvA specifically binds to HJ cruciform DNA, conferring on it an open structure. The RuvB hexamer acts as an ATP-dependent pump, pulling dsDNA into and through the RuvAB complex. HJ branch migration allows RuvC to scan DNA until it finds its consensus sequence, where it cleaves and resolves the cruciform DNA. The chain is Holliday junction branch migration complex subunit RuvA from Mycobacterium sp. (strain JLS).